Reading from the N-terminus, the 282-residue chain is 4-diphosphocytidyl-2-C-methyl-D-erythritol kinase (282 aa).

K9 is an active-site residue. Residue P98 to S108 participates in ATP binding. D140 is a catalytic residue.

It belongs to the GHMP kinase family. IspE subfamily. Homodimer.

The catalysed reaction is 4-CDP-2-C-methyl-D-erythritol + ATP = 4-CDP-2-C-methyl-D-erythritol 2-phosphate + ADP + H(+). The protein operates within isoprenoid biosynthesis; isopentenyl diphosphate biosynthesis via DXP pathway; isopentenyl diphosphate from 1-deoxy-D-xylulose 5-phosphate: step 3/6. In terms of biological role, catalyzes the phosphorylation of the position 2 hydroxy group of 4-diphosphocytidyl-2C-methyl-D-erythritol. This Salmonella paratyphi A (strain ATCC 9150 / SARB42) protein is 4-diphosphocytidyl-2-C-methyl-D-erythritol kinase.